Reading from the N-terminus, the 464-residue chain is Soluble pyridine nucleotide transhydrogenase (464 aa).

35–44 (EDKSQVGGNC) contacts FAD.

Belongs to the class-I pyridine nucleotide-disulfide oxidoreductase family. FAD serves as cofactor.

It is found in the cytoplasm. It catalyses the reaction NAD(+) + NADPH = NADH + NADP(+). In terms of biological role, conversion of NADPH, generated by peripheral catabolic pathways, to NADH, which can enter the respiratory chain for energy generation. The protein is Soluble pyridine nucleotide transhydrogenase of Hahella chejuensis (strain KCTC 2396).